A 131-amino-acid polypeptide reads, in one-letter code: D-ribose pyranase (131 aa).

The active-site Proton donor is the histidine 20. Residues aspartate 28, histidine 98, and 120–122 (YAN) contribute to the substrate site.

Belongs to the RbsD / FucU family. RbsD subfamily. As to quaternary structure, homodecamer.

It localises to the cytoplasm. The enzyme catalyses beta-D-ribopyranose = beta-D-ribofuranose. It participates in carbohydrate metabolism; D-ribose degradation; D-ribose 5-phosphate from beta-D-ribopyranose: step 1/2. Its function is as follows. Catalyzes the interconversion of beta-pyran and beta-furan forms of D-ribose. This is D-ribose pyranase from Bacillus cereus (strain 03BB102).